We begin with the raw amino-acid sequence, 576 residues long: Sulfite reductase [NADPH] hemoprotein beta-component (576 aa).

Residues 1 to 12 are compositionally biased toward basic and acidic residues; that stretch reads MDAKTQPDRSRD. The segment at 1-26 is disordered; that stretch reads MDAKTQPDRSRDVSQPLDKLGPDETL. Cys-441, Cys-447, Cys-486, and Cys-490 together coordinate [4Fe-4S] cluster. Cys-490 is a siroheme binding site.

This sequence belongs to the nitrite and sulfite reductase 4Fe-4S domain family. Alpha(8)-beta(8). The alpha component is a flavoprotein, the beta component is a hemoprotein. Siroheme serves as cofactor. [4Fe-4S] cluster is required as a cofactor.

It carries out the reaction hydrogen sulfide + 3 NADP(+) + 3 H2O = sulfite + 3 NADPH + 4 H(+). The protein operates within sulfur metabolism; hydrogen sulfide biosynthesis; hydrogen sulfide from sulfite (NADPH route): step 1/1. Functionally, component of the sulfite reductase complex that catalyzes the 6-electron reduction of sulfite to sulfide. This is one of several activities required for the biosynthesis of L-cysteine from sulfate. This chain is Sulfite reductase [NADPH] hemoprotein beta-component, found in Nitrobacter winogradskyi (strain ATCC 25391 / DSM 10237 / CIP 104748 / NCIMB 11846 / Nb-255).